Reading from the N-terminus, the 92-residue chain is Small ribosomal subunit protein uS19 (92 aa).

Positions 73-92 are disordered; it reads EFSPSRTYYGHAADKKAKRR.

This sequence belongs to the universal ribosomal protein uS19 family.

Its function is as follows. Protein S19 forms a complex with S13 that binds strongly to the 16S ribosomal RNA. This Maricaulis maris (strain MCS10) (Caulobacter maris) protein is Small ribosomal subunit protein uS19.